Here is a 292-residue protein sequence, read N- to C-terminus: Probable ABC transporter permease protein PH1215 (292 aa).

The next 6 helical transmembrane spans lie at 10–30 (IILF…FAVV), 72–92 (LLLI…LAIL), 106–126 (IYVL…AWMY), 160–180 (IIIA…LAGI), 215–235 (LSAF…IWVL), and 261–281 (FAYG…VVLP). Positions 68-284 (LRNNLLLILL…ALVVVLPYLY (217 aa)) constitute an ABC transmembrane type-1 domain.

Belongs to the binding-protein-dependent transport system permease family. MalFG subfamily.

Its subcellular location is the cell membrane. Its function is as follows. Probably part of a binding-protein-dependent transport system PH1214/15/16. Probably responsible for the translocation of the substrate across the membrane. In Pyrococcus horikoshii (strain ATCC 700860 / DSM 12428 / JCM 9974 / NBRC 100139 / OT-3), this protein is Probable ABC transporter permease protein PH1215.